The sequence spans 61 residues: Small ribosomal subunit protein uS14 (61 aa).

Zn(2+)-binding residues include cysteine 24, cysteine 27, cysteine 40, and cysteine 43.

This sequence belongs to the universal ribosomal protein uS14 family. Zinc-binding uS14 subfamily. As to quaternary structure, part of the 30S ribosomal subunit. Contacts proteins S3 and S10. Zn(2+) serves as cofactor.

In terms of biological role, binds 16S rRNA, required for the assembly of 30S particles and may also be responsible for determining the conformation of the 16S rRNA at the A site. The protein is Small ribosomal subunit protein uS14 of Clostridium acetobutylicum (strain ATCC 824 / DSM 792 / JCM 1419 / IAM 19013 / LMG 5710 / NBRC 13948 / NRRL B-527 / VKM B-1787 / 2291 / W).